Consider the following 424-residue polypeptide: L-glutamine:2-deoxy-scyllo-inosose aminotransferase (424 aa).

Lysine 202 is modified (N6-(pyridoxal phosphate)lysine).

The protein belongs to the DegT/DnrJ/EryC1 family. L-glutamine:2-deoxy-scyllo-inosose/scyllo-inosose aminotransferase subfamily. It depends on pyridoxal 5'-phosphate as a cofactor.

The enzyme catalyses 2-deoxy-L-scyllo-inosose + L-glutamine = 2-deoxy-scyllo-inosamine + 2-oxoglutaramate. It catalyses the reaction 3-amino-2,3-dideoxy-scyllo-inosose + L-glutamine = 2-deoxystreptamine + 2-oxoglutaramate. It participates in metabolic intermediate biosynthesis; 2-deoxystreptamine biosynthesis; 2-deoxystreptamine from D-glucose 6-phosphate: step 2/4. It functions in the pathway metabolic intermediate biosynthesis; 2-deoxystreptamine biosynthesis; 2-deoxystreptamine from D-glucose 6-phosphate: step 4/4. The protein operates within antibiotic biosynthesis; ribostamycin biosynthesis. In terms of biological role, catalyzes the PLP-dependent transamination of 2-deoxy-scyllo-inosose (2-DOI) to form 2-deoxy-scyllo-inosamine (2-DOIA) using L-glutamine as the amino donor. Also catalyzes the transamination of 3-amino-2,3-dideoxy-scyllo-inosose (keto-2-DOIA) into 2-deoxystreptamine (2-DOS). This is L-glutamine:2-deoxy-scyllo-inosose aminotransferase (rbmB) from Streptomyces ribosidificus.